A 240-amino-acid polypeptide reads, in one-letter code: CRISPR system aCascade subunit Cas5 1 (240 aa).

Belongs to the CRISPR-associated protein Cas5 family. Subtype I-A/Apern subfamily. Part of the aCascade ribonucleoprotein complex, minimally composed of Csa2 and Cas5a, which binds crRNA. Other possible components of aCascade in strain P1 are Cas6b (SSO1437) and Csa5 (SSO1443), while SSO1399, Cas5b (SSO1400) and SSO1401 have sometimes been seen weakly associated. Csa2 is probably the major RNA-binding subunit. The Csa2-Cas5a-crRNA complex also binds target DNA homologous to crRNA, probably forming an R-loop. Purified aCascade forms a filament about 6 nm in width.

Functionally, CRISPR (clustered regularly interspaced short palindromic repeat) is an adaptive immune system that provides protection against mobile genetic elements (viruses, transposable elements and conjugative plasmids). CRISPR clusters contain spacers, sequences complementary to antecedent mobile elements, and target invading nucleic acids. CRISPR clusters are transcribed and processed into CRISPR RNA (crRNA). The sequence is that of CRISPR system aCascade subunit Cas5 1 (cas5a) from Saccharolobus solfataricus (strain ATCC 35092 / DSM 1617 / JCM 11322 / P2) (Sulfolobus solfataricus).